The following is a 392-amino-acid chain: Peptidoglycan hydrolase PcsB (392 aa).

An N-terminal signal peptide occupies residues 1–27 (MKKKILASLLLSTVMVSQVAVLTTAHA). Coiled-coil stretches lie at residues 34-96 (IAAQ…LSKN) and 191-227 (TKQAELKAAELSLAAEKATAEGEKASLLEQKAAAEAE). The segment at 47 to 267 (QQQEAQKQVD…TAQVQAVSES (221 aa)) is interacts with large extracellular loop of FtsX. The 124-residue stretch at 267–390 (SAAAPVRAKV…TSEGFVTYIY (124 aa)) folds into the Peptidase C51 domain.

In terms of assembly, homodimer. Interacts (via N-terminal coiled coil domain) with FtsX (via large extracellular loop). This interaction directs PcsB to equatorial and septal sites of dividing cells. Interacts with FtsE.

The protein localises to the cell membrane. It is found in the cell septum. The protein resides in the secreted. Lacks peptidoglycan-hydrolase activity in vitro, probably due to auto-inhibition by the CC domain. In the homodimer, interaction between the CC domain in one monomer and the hydrolase active site in the peptidase C51/CHAP domain in the other monomer probably mediates auto-inhibition of the hydrolase activity. Peptidoglycan-hydrolase activity. Required in maintaining normal growth and cellular morphology. Involved in splitting of the septum during cell division. The sequence is that of Peptidoglycan hydrolase PcsB from Streptococcus pneumoniae serotype 2 (strain D39 / NCTC 7466).